An 873-amino-acid polypeptide reads, in one-letter code: Valine--tRNA ligase (873 aa).

The 'HIGH' region motif lies at 46 to 56 (PNVTGKLHIGH). The 'KMSKS' region signature appears at 525–529 (KMSKS). Lys-528 is an ATP binding site. The stretch at 804–873 (NDDFIDKEKM…ELIQDKLNKM (70 aa)) forms a coiled coil.

The protein belongs to the class-I aminoacyl-tRNA synthetase family. ValS type 1 subfamily. Monomer.

It is found in the cytoplasm. It catalyses the reaction tRNA(Val) + L-valine + ATP = L-valyl-tRNA(Val) + AMP + diphosphate. In terms of biological role, catalyzes the attachment of valine to tRNA(Val). As ValRS can inadvertently accommodate and process structurally similar amino acids such as threonine, to avoid such errors, it has a 'posttransfer' editing activity that hydrolyzes mischarged Thr-tRNA(Val) in a tRNA-dependent manner. The polypeptide is Valine--tRNA ligase (Mesoplasma florum (strain ATCC 33453 / NBRC 100688 / NCTC 11704 / L1) (Acholeplasma florum)).